The primary structure comprises 587 residues: Glutathione hydrolase proenzyme (587 aa).

The first 28 residues, 1 to 28 (MKRTWNVCLTALLSVLLVAGSVPFHAEA), serve as a signal peptide directing secretion. Residues 29–35 (KKPPKSY) constitute a propeptide that is removed on maturation. Arginine 113 serves as a coordination point for L-glutamate. The Nucleophile role is filled by threonine 403. L-glutamate contacts are provided by residues threonine 421, glutamate 423, glutamate 442, aspartate 445, 464 to 465 (SS), and 485 to 486 (GG).

Belongs to the gamma-glutamyltransferase family. This enzyme consists of two polypeptide chains, which are synthesized in precursor form from a single polypeptide. Cleaved by autocatalysis into a large and small subunit.

It is found in the secreted. It carries out the reaction an N-terminal (5-L-glutamyl)-[peptide] + an alpha-amino acid = 5-L-glutamyl amino acid + an N-terminal L-alpha-aminoacyl-[peptide]. The catalysed reaction is glutathione + H2O = L-cysteinylglycine + L-glutamate. It catalyses the reaction an S-substituted glutathione + H2O = an S-substituted L-cysteinylglycine + L-glutamate. It participates in sulfur metabolism; glutathione metabolism. With respect to regulation, inhibited by glucose. Its function is as follows. Cleaves the gamma-glutamyl bond of extracellular glutathione (gamma-Glu-Cys-Gly), glutathione conjugates, and other gamma-glutamyl compounds. The metabolism of glutathione releases free glutamate and the dipeptide cysteinyl-glycine, which is hydrolyzed to cysteine and glycine by dipeptidases. Uses glutamine as a gamma-glutamyl donor and acceptor for gamma-polyglutamic acid synthesis. Dipeptides are better gamma-glutamyl acceptors than free amino acids. The chain is Glutathione hydrolase proenzyme (ggt) from Bacillus subtilis subsp. natto.